Reading from the N-terminus, the 194-residue chain is Troponin I 4 (194 aa).

The tract at residues Met1–Glu27 is disordered. Positions Asp7–Glu27 are enriched in basic and acidic residues.

The protein belongs to the troponin I family. As to expression, expression is detected only in pharyngeal muscle cells from embryos to adults.

Its function is as follows. Troponin I is the inhibitory subunit of troponin, the thin filament regulatory complex which confers calcium-sensitivity to muscle actomyosin ATPase activity. The chain is Troponin I 4 (tni-4) from Caenorhabditis elegans.